The chain runs to 233 residues: Large ribosomal subunit protein uL1 (233 aa).

It belongs to the universal ribosomal protein uL1 family. As to quaternary structure, part of the 50S ribosomal subunit.

In terms of biological role, binds directly to 23S rRNA. The L1 stalk is quite mobile in the ribosome, and is involved in E site tRNA release. Its function is as follows. Protein L1 is also a translational repressor protein, it controls the translation of the L11 operon by binding to its mRNA. The protein is Large ribosomal subunit protein uL1 of Shewanella pealeana (strain ATCC 700345 / ANG-SQ1).